Here is a 151-residue protein sequence, read N- to C-terminus: uncharacterized protein (151 aa).

Residues 1–48 (MRMAPTESTEGRRLWPGPREGGSGKETTSEKLSNLPRPHSYSPKRADA) are disordered.

This is an uncharacterized protein from Homo sapiens (Human).